The chain runs to 117 residues: Protein OPG035 (117 aa).

It belongs to the poxviridae OPG035 family.

Functionally, bcl-2-like protein which contributes to virulence by preventing host NF-kappa-B activation in response to pro-inflammatory stimuli such as TNF-alpha or IL1B. This chain is Protein OPG035 (OPG035), found in Monkeypox virus.